Reading from the N-terminus, the 305-residue chain is Sulfate adenylyltransferase subunit 2 (305 aa).

A disordered region spans residues 283–305 (RQGRVIDHDQSASMEKKKQEGYF).

It belongs to the PAPS reductase family. CysD subfamily. Heterodimer composed of CysD, the smaller subunit, and CysN.

It catalyses the reaction sulfate + ATP + H(+) = adenosine 5'-phosphosulfate + diphosphate. It participates in sulfur metabolism; hydrogen sulfide biosynthesis; sulfite from sulfate: step 1/3. Functionally, with CysN forms the ATP sulfurylase (ATPS) that catalyzes the adenylation of sulfate producing adenosine 5'-phosphosulfate (APS) and diphosphate, the first enzymatic step in sulfur assimilation pathway. APS synthesis involves the formation of a high-energy phosphoric-sulfuric acid anhydride bond driven by GTP hydrolysis by CysN coupled to ATP hydrolysis by CysD. The sequence is that of Sulfate adenylyltransferase subunit 2 from Caulobacter sp. (strain K31).